Here is a 440-residue protein sequence, read N- to C-terminus: Streptokinase C (440 aa).

The signal sequence occupies residues methionine 1–alanine 26.

Its function is as follows. This protein is not a protease, but it activates plasminogen by complexing with it. As a potential virulence factor, it is thought to prevent the formation of effective fibrin barriers around the site of infection, thereby contributing to the invasiveness of the cells. The sequence is that of Streptokinase C (skc) from Streptococcus dysgalactiae subsp. equisimilis (Streptococcus equisimilis).